The following is a 366-amino-acid chain: UDP-N-acetylglucosamine--N-acetylmuramyl-(pentapeptide) pyrophosphoryl-undecaprenol N-acetylglucosamine transferase (366 aa).

UDP-N-acetyl-alpha-D-glucosamine is bound by residues 10–12 (TGG), N124, S195, and Q295.

Belongs to the glycosyltransferase 28 family. MurG subfamily.

It is found in the cell membrane. The catalysed reaction is di-trans,octa-cis-undecaprenyl diphospho-N-acetyl-alpha-D-muramoyl-L-alanyl-D-glutamyl-meso-2,6-diaminopimeloyl-D-alanyl-D-alanine + UDP-N-acetyl-alpha-D-glucosamine = di-trans,octa-cis-undecaprenyl diphospho-[N-acetyl-alpha-D-glucosaminyl-(1-&gt;4)]-N-acetyl-alpha-D-muramoyl-L-alanyl-D-glutamyl-meso-2,6-diaminopimeloyl-D-alanyl-D-alanine + UDP + H(+). The protein operates within cell wall biogenesis; peptidoglycan biosynthesis. In terms of biological role, cell wall formation. Catalyzes the transfer of a GlcNAc subunit on undecaprenyl-pyrophosphoryl-MurNAc-pentapeptide (lipid intermediate I) to form undecaprenyl-pyrophosphoryl-MurNAc-(pentapeptide)GlcNAc (lipid intermediate II). The chain is UDP-N-acetylglucosamine--N-acetylmuramyl-(pentapeptide) pyrophosphoryl-undecaprenol N-acetylglucosamine transferase from Bacillus licheniformis (strain ATCC 14580 / DSM 13 / JCM 2505 / CCUG 7422 / NBRC 12200 / NCIMB 9375 / NCTC 10341 / NRRL NRS-1264 / Gibson 46).